The sequence spans 600 residues: Aspartate--tRNA ligase (600 aa).

Glu175 contacts L-aspartate. The segment at 199 to 202 (QLFK) is aspartate. Arg221 contributes to the L-aspartate binding site. ATP-binding positions include 221-223 (RDE) and Gln230. His448 contributes to the L-aspartate binding site. Residue Glu484 coordinates ATP. Arg491 is an L-aspartate binding site. 536–539 (GLDR) lines the ATP pocket.

Belongs to the class-II aminoacyl-tRNA synthetase family. Type 1 subfamily. As to quaternary structure, homodimer.

The protein localises to the cytoplasm. The enzyme catalyses tRNA(Asp) + L-aspartate + ATP = L-aspartyl-tRNA(Asp) + AMP + diphosphate. Catalyzes the attachment of L-aspartate to tRNA(Asp) in a two-step reaction: L-aspartate is first activated by ATP to form Asp-AMP and then transferred to the acceptor end of tRNA(Asp). The chain is Aspartate--tRNA ligase from Limosilactobacillus reuteri (strain DSM 20016) (Lactobacillus reuteri).